We begin with the raw amino-acid sequence, 373 residues long: UDP-3-O-acylglucosamine N-acyltransferase 2 (373 aa).

Histidine 239 functions as the Proton acceptor in the catalytic mechanism. Residues 345-373 (KTNGKSGQADAPPKVALECHGTTGDAPQG) form a disordered region.

It belongs to the transferase hexapeptide repeat family. LpxD subfamily. In terms of assembly, homotrimer.

It carries out the reaction a UDP-3-O-[(3R)-3-hydroxyacyl]-alpha-D-glucosamine + a (3R)-hydroxyacyl-[ACP] = a UDP-2-N,3-O-bis[(3R)-3-hydroxyacyl]-alpha-D-glucosamine + holo-[ACP] + H(+). It participates in bacterial outer membrane biogenesis; LPS lipid A biosynthesis. Functionally, catalyzes the N-acylation of UDP-3-O-acylglucosamine using 3-hydroxyacyl-ACP as the acyl donor. Is involved in the biosynthesis of lipid A, a phosphorylated glycolipid that anchors the lipopolysaccharide to the outer membrane of the cell. This is UDP-3-O-acylglucosamine N-acyltransferase 2 from Gloeobacter violaceus (strain ATCC 29082 / PCC 7421).